The following is a 505-amino-acid chain: Lysine--tRNA ligase (505 aa).

Positions 415 and 422 each coordinate Mg(2+).

It belongs to the class-II aminoacyl-tRNA synthetase family. Homodimer. Requires Mg(2+) as cofactor.

The protein resides in the cytoplasm. It catalyses the reaction tRNA(Lys) + L-lysine + ATP = L-lysyl-tRNA(Lys) + AMP + diphosphate. In Salmonella paratyphi C (strain RKS4594), this protein is Lysine--tRNA ligase.